A 491-amino-acid chain; its full sequence is MTDLTSLSAAELAGLVARGESSAAEVTQAHLDRITAVDDRVHAFLHVDTEGALDAARAVDARRAAGEPLGPLAGVPVAVKDVLTTKGIPTTAGSRILAGWRPPYDSTIVRRLRAAGTVMLGKTNMDEFAMGSSTEYSAFGPTHNPWDLSRIPGGSGGGSAAALAAYETPLSIGSDTGGSIRQPGAVTGTVGVKPTYGGTSRYGLVAFSSSLDTPGPCARTVLDAALLHEAIGGHDPSDSTSIPAPVPDVVAAARLGASGDLAGVRLGVVREFAGEGAEPGVLAAFRAAVDTLTKLGAEVVEVSCPHFQYALPAYYLIAPSECSSNLARFDGVRFGLRVGDDGNRSLEEVMSATREAGFGPEVKRRVVLGTYALSSGYYDAYYGQAQKVRTLITRDFTTAFEQVDALVSPTTPFVAFPVGARTADPYQMYLADLFTIPSNLYGGPGISVPCGLADGLPVGLQVMAPTMADDRMYRVAAALESAVGPFTPPAL.

Residues Lys80 and Ser155 each act as charge relay system in the active site. Ser179 (acyl-ester intermediate) is an active-site residue.

The protein belongs to the amidase family. GatA subfamily. In terms of assembly, heterotrimer of A, B and C subunits.

It catalyses the reaction L-glutamyl-tRNA(Gln) + L-glutamine + ATP + H2O = L-glutaminyl-tRNA(Gln) + L-glutamate + ADP + phosphate + H(+). Functionally, allows the formation of correctly charged Gln-tRNA(Gln) through the transamidation of misacylated Glu-tRNA(Gln) in organisms which lack glutaminyl-tRNA synthetase. The reaction takes place in the presence of glutamine and ATP through an activated gamma-phospho-Glu-tRNA(Gln). The sequence is that of Glutamyl-tRNA(Gln) amidotransferase subunit A from Salinispora arenicola (strain CNS-205).